The sequence spans 557 residues: MSDPEMAWVPEPPAMTLGASRVELRVSCHGLLDRDTLTKPHPCVLLKLHSDEQWVEVERTEVLRSCSSPVFSRVLALEYFFEEKQPLQFHVFDAEDGSTSPRNDTFLGSTECTLGQIVSQTKVTKPLLLKNGKNAGKSTITIVAEEVSGTNDYVQLTFRAHKLDNKDLFSKSDPFMEIYKTNGDQSDQLVWRTEVVKNNLNPSWEPFRLSLHSLCSCDVHRPLKFLVYDYDSSGKHDFIGEFTSTFQEMQEGTANPGQEMQWDCINPKYRDKKKHYKSSGTVVLAQCTVEKVHTFLDYIMGGCQISFTVAIDFTASNGDPRSSQSLHCLSPRQPNHYLQALRAVGGICQDYDSDKRFPAFGFGARIPPNFEVSHDFAINFDPENPECEEISGVIASYRRCLPQIQLYGPTNVAPIINRVAGPAQREQSTGQATKYSVLLVLTDGVVSDMAETRTAIVRASRLPMSIIIVGVGNADFSDMRLLDGDDGTLRCPRGVPAARDIVQFVPFRDFKDASPSALAKCVLAEVPRQVVEYYASQGISPGAPRPCTPAMTPSPSP.

C2 domains lie at 1-127 and 134-263; these read MSDP…TKPL and NAGK…MQWD. 5 residues coordinate Ca(2+): D167, D173, D229, D231, and D237. The segment at 244–303 is linker region; the sequence is STFQEMQEGTANPGQEMQWDCINPKYRDKKKHYKSSGTVVLAQCTVEKVHTFLDYIMGGC. In terms of domain architecture, VWFA spans 306 to 526; that stretch reads SFTVAIDFTA…ALAKCVLAEV (221 aa).

It belongs to the copine family. Interacts (via second C2 domain) with OS9 (via C-terminus); this interaction occurs in a calcium-dependent manner in vitro. May interact with NECAB1. Ca(2+) is required as a cofactor.

The protein resides in the cytoplasm. It is found in the cell membrane. Its subcellular location is the endosome. The protein localises to the cytoplasmic vesicle. It localises to the clathrin-coated vesicle. The protein resides in the perikaryon. It is found in the cell projection. Its subcellular location is the dendrite. Calcium-dependent phospholipid-binding protein that plays a role in calcium-mediated intracellular processes. Binds phospholipid membranes in a calcium-dependent manner. Plays a role in dendrite formation by melanocytes. In Bos taurus (Bovine), this protein is Copine-6.